A 215-amino-acid polypeptide reads, in one-letter code: Protein GET1 (215 aa).

Topologically, residues 1–4 (MINL) are lumenal. The helical transmembrane segment at 5-24 (ALVIFLCTLLNQIVSWVGKS) threads the bilayer. Residues 25–108 (VLQEIAFTAY…SFSKKFSTLL (84 aa)) are Cytoplasmic-facing. Residues 73-94 (AKLRRKLDKGLADLEKTNNTLS) are a coiled coil. Residues 109 to 129 (WLMTTGAQFLLSWWFRKQPIF) traverse the membrane as a helical segment. Over 130-153 (WLPEGWVPYPVAWLLSFPSAPIGS) the chain is Lumenal. Residues 154–170 (VSSGAWGAICRRVLSTL) traverse the membrane as a helical segment. The Cytoplasmic segment spans residues 171 to 215 (QEIIQSVLAPSPAATGPVPTGPSSAKNDQPEAKIEALALEHEKLD). A disordered region spans residues 181–202 (SPAATGPVPTGPSSAKNDQPEA).

The protein belongs to the WRB/GET1 family. In terms of assembly, interacts with GET3.

Its subcellular location is the endoplasmic reticulum membrane. In terms of biological role, required for the post-translational delivery of tail-anchored (TA) proteins to the endoplasmic reticulum. Acts as a membrane receptor for soluble GET3, which recognizes and selectively binds the transmembrane domain of TA proteins in the cytosol. This is Protein GET1 from Cryptococcus neoformans var. neoformans serotype D (strain B-3501A) (Filobasidiella neoformans).